A 494-amino-acid chain; its full sequence is MRLTRCWAALAAAIILNLLVFFYVSWLQHQPRNSRARGPRRTSAIGPRVTVLIREFEAFDNAVPELVDSFLQQDPAQPVVVAADTLPYPPLALPRIPNVRLALLQPALDRPAAASRPETYVATEFVALVPDGARAESPGHLERMVEALRGSSARLVAAPVATANPARCLALNVSLREWTARYDPAPSAPRCDALDGDAVLLMRSRDLFNLSVPLARPLATSLFLQTALRGWAVQLLDLTFAAARQPPLATAHARWKAEREGRSRRAALLRSLGIRLVSWEGGRLEWFGCSKESARCFGTVAGDTPAYLYEGRWTPPCCLRALRETARYVVGVLEAAGVRYWLEGGSLLGAARHGDIIPWDYDVDLGIYLEDVGNCEQLRGAEAGSVVDERGFVWEKAVEGDFFRVQYSENNHLHVDLWPFYPRNGVMTKDTWLDHRQDVEFPEHFLQPLVPLPFAGFMAQAPNNYRRFLELKFGPGVIENPEYPNPALLSLTGG.

Residues Met1–Cys6 lie on the Cytoplasmic side of the membrane. The chain crosses the membrane as a helical span at residues Trp7 to His29. Over Gln30–Gly494 the chain is Lumenal. Cys168 and Cys191 are disulfide-bonded. Asn172 and Asn209 each carry an N-linked (GlcNAc...) asparagine glycan. Zn(2+) contacts are provided by Cys289, Cys296, Cys317, and Cys318. Residues Cys289–Cys318 are zinc finger loop. 2 residues coordinate CDP-L-ribitol: Gly345 and Arg352. CDP-L-ribitol stretches follow at residues Trp359–Asp364, Gln437–Asp438, and Asn480–Glu482. Mg(2+)-binding residues include Asp360, Asp362, and Asp364.

Belongs to the LicD transferase family. Homodimer; disulfide-linked. Forms a complex composed of FKRP, FKTN/fukutin, and RXYLT1/TMEM5. Also exists as large multimeric protein complexes. May interact with the dystrophin-glycoprotein complex (DGC). In terms of processing, N-glycosylated. As to expression, expressed in the retina, specifically in the inner segments of the photoreceptors, the outer plexiform layers, inner nuclear layers, and ganglion cell layers (at protein level). Expressed at highest levels in brain, lung, heart, kidney and liver.

The protein resides in the golgi apparatus membrane. It localises to the secreted. It is found in the cell membrane. The protein localises to the sarcolemma. Its subcellular location is the rough endoplasmic reticulum. The protein resides in the cytoplasm. The catalysed reaction is 3-O-[Rib-ol-P-3-beta-D-GalNAc-(1-&gt;3)-beta-D-GlcNAc-(1-&gt;4)-(O-6-P-alpha-D-Man)]-Thr-[protein] + CDP-L-ribitol = 3-O-[Rib-ol-P-Rib-ol-P-3-beta-D-GalNAc-(1-&gt;3)-beta-D-GlcNAc-(1-&gt;4)-(O-6-P-alpha-D-Man)]-Thr-[protein] + CMP + H(+). Its pathway is protein modification; protein glycosylation. Functionally, catalyzes the transfer of CDP-ribitol to ribitol 5-phosphate previously attached by FKTN/fukutin of to the phosphorylated O-mannosyl trisaccharide (N-acetylgalactosamine-beta-3-N-acetylglucosamine-beta-4-(phosphate-6-)mannose), a carbohydrate structure present in alpha-dystroglycan (DAG1). This constitutes the second step in the formation of the ribose 5-phosphate tandem repeat which links the phosphorylated O-mannosyl trisaccharide to the ligand binding moiety composed of repeats of 3-xylosyl-alpha-1,3-glucuronic acid-beta-1. This chain is Ribitol 5-phosphate transferase FKRP, found in Mus musculus (Mouse).